A 197-amino-acid polypeptide reads, in one-letter code: MYDYIKGNLTKITAKYIVLETGGLGYVINVANPYSFSNQINQAIQIYIHHVVREDAHLLYGFHTEDEKAVFLNLISVSGIGPTSALAIIAADDNEGLVKAIDHSDVNYLMKFPKIGKKTAQQMVLDLAGKFVDINEVSTDKSKVSTINNNQELEEAVEALLALGYKTNELKKIEKFFEGTTDTAENYIKSALKMLMK.

Residues 1-63 are domain I; that stretch reads MYDYIKGNLT…EDAHLLYGFH (63 aa). The interval 64–142 is domain II; that stretch reads TEDEKAVFLN…DINEVSTDKS (79 aa). Positions 143 to 147 are flexible linker; that stretch reads KVSTI. Residues 148–197 are domain III; the sequence is NNNQELEEAVEALLALGYKTNELKKIEKFFEGTTDTAENYIKSALKMLMK.

This sequence belongs to the RuvA family. Homotetramer. Forms an RuvA(8)-RuvB(12)-Holliday junction (HJ) complex. HJ DNA is sandwiched between 2 RuvA tetramers; dsDNA enters through RuvA and exits via RuvB. An RuvB hexamer assembles on each DNA strand where it exits the tetramer. Each RuvB hexamer is contacted by two RuvA subunits (via domain III) on 2 adjacent RuvB subunits; this complex drives branch migration. In the full resolvosome a probable DNA-RuvA(4)-RuvB(12)-RuvC(2) complex forms which resolves the HJ.

It localises to the cytoplasm. The RuvA-RuvB-RuvC complex processes Holliday junction (HJ) DNA during genetic recombination and DNA repair, while the RuvA-RuvB complex plays an important role in the rescue of blocked DNA replication forks via replication fork reversal (RFR). RuvA specifically binds to HJ cruciform DNA, conferring on it an open structure. The RuvB hexamer acts as an ATP-dependent pump, pulling dsDNA into and through the RuvAB complex. HJ branch migration allows RuvC to scan DNA until it finds its consensus sequence, where it cleaves and resolves the cruciform DNA. The polypeptide is Holliday junction branch migration complex subunit RuvA (Streptococcus mutans serotype c (strain ATCC 700610 / UA159)).